Consider the following 306-residue polypeptide: GTP cyclohydrolase FolE2 (306 aa).

Belongs to the GTP cyclohydrolase IV family.

The enzyme catalyses GTP + H2O = 7,8-dihydroneopterin 3'-triphosphate + formate + H(+). It participates in cofactor biosynthesis; 7,8-dihydroneopterin triphosphate biosynthesis; 7,8-dihydroneopterin triphosphate from GTP: step 1/1. Functionally, converts GTP to 7,8-dihydroneopterin triphosphate. The chain is GTP cyclohydrolase FolE2 from Xanthomonas oryzae pv. oryzae (strain MAFF 311018).